Reading from the N-terminus, the 253-residue chain is MANLGCWMLVLFVATWSDLGLCKKRPKPGGWNTGGSRYPGQGSPGGNRYPPQGGGGWGQPHGGGWGQPHGGGWGQPHGGGWGQPHGGGWGQGGGTHNQWHKPSKPKTSMKHMAGAAAAGAVVGGLGGYMLGSAMSRPLIHFGNDYEDRYYRENMYRYPNQVYYRPVDQYSNQNNFVHDCVNITIKQHTVTTTTKGENFTETDVKMMERVVEQMCITQYEKESQAYYQRGSSMVLFSSPPVILLISFLIFLIVG.

Positions M1–C22 are cleaved as a signal peptide. An interaction with GRB2, ERI3 and SYN1 region spans residues K23 to S230. The disordered stretch occupies residues P26–S108. Tandem repeats lie at residues P51–Q59, P60–Q67, P68–Q75, P76–Q83, and P84–Q91. The interval P51–Q91 is 5 X 8 AA tandem repeats of P-H-G-G-G-W-G-Q. Positions Q52–T95 are enriched in gly residues. The Cu(2+) site is built by H61, G62, G63, H69, G70, G71, H77, G78, G79, H85, G86, and G87. A compositionally biased stretch (basic residues) spans Q98 to S108. A disulfide bridge connects residues C179 and C214. Residues N181 and N197 are each glycosylated (N-linked (GlcNAc...) asparagine). Residue S230 is the site of GPI-anchor amidated serine attachment. A propeptide spans S231–G253 (removed in mature form).

This sequence belongs to the prion family. Monomer and homodimer. Has a tendency to aggregate into amyloid fibrils containing a cross-beta spine, formed by a steric zipper of superposed beta-strands. Soluble oligomers may represent an intermediate stage on the path to fibril formation. Copper binding may promote oligomerization. Interacts with GRB2, APP, ERI3/PRNPIP and SYN1. Mislocalized cytosolically exposed PrP interacts with MGRN1; this interaction alters MGRN1 subcellular location and causes lysosomal enlargement. Interacts with KIAA1191.

Its subcellular location is the cell membrane. It is found in the golgi apparatus. In terms of biological role, its primary physiological function is unclear. Has cytoprotective activity against internal or environmental stresses. May play a role in neuronal development and synaptic plasticity. May be required for neuronal myelin sheath maintenance. May play a role in iron uptake and iron homeostasis. Soluble oligomers are toxic to cultured neuroblastoma cells and induce apoptosis (in vitro). Association with GPC1 (via its heparan sulfate chains) targets PRNP to lipid rafts. Also provides Cu(2+) or Zn(2+) for the ascorbate-mediated GPC1 deaminase degradation of its heparan sulfate side chains. This Macaca fascicularis (Crab-eating macaque) protein is Major prion protein (PRNP).